Reading from the N-terminus, the 90-residue chain is UPF0335 protein RPD_1405 (90 aa).

The protein belongs to the UPF0335 family.

The sequence is that of UPF0335 protein RPD_1405 from Rhodopseudomonas palustris (strain BisB5).